The primary structure comprises 422 residues: MATSRAFTLFAFTLSLLTVASTVSGHNITQILSDTPEYSSFNNYLSQTKLADEINSRTTITVLVLNNGAMSSLAGKHPLSVVKNALSLLVLLDYYDPLKLHQLSKGTTLTTTLYQTTGHALGNLGFVNVTDLKGGKVGFGSAAPGSKLDSSYTKSVKQIPYNISVLEINAPIIAPGILTAPAPSSAGVSNITGLLEKAGCKTFANLLVSSGVIKTFESTVEKGLTVFAPSDEAFKARGVPDLTNLTQAEVVSLLEYHALAEYKPKGSLKTNKDAISTLATNGAGKYDLTTSTSGDEVILHTGVGPSRLADTVVDETPVVIFTVDNVLLPAELFGKSSSPAPAPEPVSAPTPTPAKSPSPVEAPSPTAASPPAPPVDESSPEGAPSDSPTSSENSNAKNAAFHVNAPALFTALVTIAATSLLL.

The signal sequence occupies residues 1–25 (MATSRAFTLFAFTLSLLTVASTVSG). 2 consecutive FAS1 domains span residues 26–172 (HNIT…NAPI) and 187–327 (GVSN…DNVL). N-linked (GlcNAc...) asparagine glycosylation is found at Asn27, Asn128, Asn162, Asn190, and Asn244. Positions 336–397 (SSSPAPAPEP…PTSSENSNAK (62 aa)) are disordered. Positions 340 to 374 (APAPEPVSAPTPTPAKSPSPVEAPSPTAASPPAPP) are enriched in pro residues. Over residues 386-397 (DSPTSSENSNAK) the composition is skewed to polar residues. Asn398 carries GPI-anchor amidated asparagine lipidation. Residues 399–422 (AAFHVNAPALFTALVTIAATSLLL) constitute a propeptide, removed in mature form.

It belongs to the fasciclin-like AGP family.

The protein localises to the cell membrane. May be a cell surface adhesion protein. The sequence is that of Fasciclin-like arabinogalactan protein 10 (FLA10) from Arabidopsis thaliana (Mouse-ear cress).